A 332-amino-acid polypeptide reads, in one-letter code: MNPLIFKEDRPLDLIAVGRLCVDLNANETQRPMEETKTFTKYVGGSPANIAIGASRLGLQTGFIGKVSDDQMGRFITGYLKDNKINTDQIHIDCTGAVTGLAFTEIKSPEDCSILMYRDNVADLNLDPTEVSEDYIKQSKALLISGTALAKSPSREAVFLALEYAHKHDVVVFFDVDYRPYTWQSEAETAVYYNLAAEKSDVIIGTREEFDMMEKLLNYEQSNDQVTAERWFSHYAKIVVIKHGGDGSIAYTRDGQSHRGGIFKTKVLKTFGAGDSYASAFIYGLMQGLEIPQAMRLGGASASIVISKHSCSDAMPTRAEISAFMETAEELV.

This sequence belongs to the carbohydrate kinase PfkB family.

The enzyme catalyses 5-dehydro-2-deoxy-D-gluconate + ATP = 6-phospho-5-dehydro-2-deoxy-D-gluconate + ADP + H(+). It functions in the pathway polyol metabolism; myo-inositol degradation into acetyl-CoA; acetyl-CoA from myo-inositol: step 5/7. In terms of biological role, catalyzes the phosphorylation of 5-dehydro-2-deoxy-D-gluconate (2-deoxy-5-keto-D-gluconate or DKG) to 6-phospho-5-dehydro-2-deoxy-D-gluconate (DKGP). This is 5-dehydro-2-deoxygluconokinase from Bacillus thuringiensis (strain Al Hakam).